Reading from the N-terminus, the 785-residue chain is Endonuclease MutS2 (785 aa).

335–342 (GPNTGGKT) contacts ATP. A Smr domain is found at 710 to 785 (LDLRGERYED…GNGVTIVEFK (76 aa)).

It belongs to the DNA mismatch repair MutS family. MutS2 subfamily. In terms of assembly, homodimer. Binds to stalled ribosomes, contacting rRNA.

Functionally, endonuclease that is involved in the suppression of homologous recombination and thus may have a key role in the control of bacterial genetic diversity. In terms of biological role, acts as a ribosome collision sensor, splitting the ribosome into its 2 subunits. Detects stalled/collided 70S ribosomes which it binds and splits by an ATP-hydrolysis driven conformational change. Acts upstream of the ribosome quality control system (RQC), a ribosome-associated complex that mediates the extraction of incompletely synthesized nascent chains from stalled ribosomes and their subsequent degradation. Probably generates substrates for RQC. This is Endonuclease MutS2 from Listeria innocua serovar 6a (strain ATCC BAA-680 / CLIP 11262).